A 32-amino-acid polypeptide reads, in one-letter code: Protein YthB (32 aa).

The sequence is that of Protein YthB from Escherichia coli (strain K12).